A 3021-amino-acid polypeptide reads, in one-letter code: Genome polyprotein (3021 aa).

Position 2 is an N-acetylserine; by host (S2). The interval 2-23 (STLPKPQRKTKRNTIRRPQDVK) is interaction with STAT1. The tract at residues 2–58 (STLPKPQRKTKRNTIRRPQDVKFPGGGVIYVGVYVLPRRGPRLGVRATRKTSERSQP) is interaction with EIF2AK2/PKR. The tract at residues 2 to 59 (STLPKPQRKTKRNTIRRPQDVKFPGGGVIYVGVYVLPRRGPRLGVRATRKTSERSQPR) is interaction with DDX3X. The interval 2 to 75 (STLPKPQRKT…PKARRSEGRS (74 aa)) is disordered. At 2 to 168 (STLPKPQRKT…EDGINFATGN (167 aa)) the chain is on the cytoplasmic side. Short sequence motifs (nuclear localization signal) lie at residues 5–13 (PKPQRKTKR) and 38–43 (PRRGPR). A compositionally biased stretch (basic residues) spans 7 to 16 (PQRKTKRNTI). The residue at position 53 (S53) is a Phosphoserine; by host. 2 consecutive short sequence motifs (nuclear localization signal) follow at residues 58–64 (PRGRRKP) and 66–71 (PKARRS). Residues 58–68 (PRGRRKPIPKA) are compositionally biased toward basic residues. S99 and S116 each carry phosphoserine; by host. The interval 112-152 (PRRRSRNLGKVIDTLTCGFADLMGYIPLVGAPLGGAARALA) is important for endoplasmic reticulum and mitochondrial localization. Residues 122 to 173 (VIDTLTCGFADLMGYIPLVGAPLGGAARALAHGVRALEDGINFATGNLPGCS) form an interaction with APOA2 region. The important for lipid droplets localization stretch occupies residues 164–167 (FATG). A helical transmembrane segment spans residues 169 to 189 (LPGCSFSIFLLALFSCLIHPA). The propeptide at 178–191 (LLALFSCLIHPAAS) is ER anchor for the core protein, removed in mature form by host signal peptidase. Topologically, residues 190–358 (ASLEWRNTSG…AGAHWGIIAG (169 aa)) are lumenal. 3 N-linked (GlcNAc...) asparagine; by host glycosylation sites follow: N196, N209, and N234. The interval 265–296 (LVGAGTMCSALYVGDMCGPVFLVGQAFTFRPR) is important for fusion. N-linked (GlcNAc...) asparagine; by host glycosylation occurs at N305. The chain crosses the membrane as a helical span at residues 359–379 (LAYYSMQGNWAKVAIIMVMFS). At 380 to 731 (GVDASTHVTA…WEFVILIFLL (352 aa)) the chain is on the lumenal side. The HVR1 stretch occupies residues 385-412 (THVTAGQAARNAYGITSLFSVGAKQNLQ). 3 N-linked (GlcNAc...) (high mannose) asparagine; by host glycosylation sites follow: N417, N423, and N430. Disulfide bonds link C429–C553, C452–C459, C487–C495, and C504–C509. The N-linked (GlcNAc...) asparagine; by host glycan is linked to N448. Residues 475–479 (ANITG) form an HVR2 region. N476 carries an N-linked (GlcNAc...) asparagine; by host glycan. The interval 481 to 494 (SDDKPYCWHYAPRP) is CD81-binding 1. N-linked (GlcNAc...) asparagine; by host glycosylation occurs at N533. Residues 545–552 (PPSGRWFG) are CD81-binding 2. N557 carries N-linked (GlcNAc...) asparagine; by host glycosylation. 4 cysteine pairs are disulfide-bonded: C565–C570, C587–C591, C603–C626, and C613–C650. N629 and N651 each carry an N-linked (GlcNAc...) (high mannose) asparagine; by host glycan. Residues C658 and C683 are joined by a disulfide bond. The tract at residues 666-677 (SEQHPLLHSTTE) is PKR/eIF2-alpha phosphorylation homology domain (PePHD). The chain crosses the membrane as a helical span at residues 732–752 (LADARVCVALWLILTISQAEA). Residues 753–763 (ALENLVTLNAV) are Lumenal-facing. A helical membrane pass occupies residues 764-784 (AAAGTHGIGWYLVAFCAAWYV). Residues 785–787 (RGK) lie on the Cytoplasmic side of the membrane. The chain crosses the membrane as a helical span at residues 788–809 (LVPLVTYSLTGLWSLALLVLLL). Topologically, residues 810–819 (PQRAYAWSGE) are lumenal. The helical transmembrane segment at 820–840 (DSATLGAGILVLFGFFTLSPW) threads the bilayer. The Cytoplasmic segment spans residues 841–844 (YKHW). Residues 845–864 (IARLIWWNQYTICRCESALH) traverse the membrane as a helical segment. Topologically, residues 865–887 (VWVPPLLARGGRDGVILLTSLLY) are lumenal. The helical transmembrane segment at 888–908 (PSLIFDITKLLIAALGPLYLI) threads the bilayer. The Peptidase C18 domain occupies 905–1032 (LYLIQATITA…DYREMGWRLL (128 aa)). Residues 909-1663 (QATITATPYF…CMSADLEVTT (755 aa)) lie on the Cytoplasmic side of the membrane. Positions 910 to 1212 (ATITATPYFV…PVETLSTQAR (303 aa)) are protease NS2-3. A lipid anchor (S-palmitoyl cysteine; by host) is attached at C928. The tract at residues 935 to 955 (MGGKYFQMIILSLADGSNTYL) is interaction with host SCPS1. Catalysis depends on for protease NS2 activity; shared with dimeric partner residues H958, E978, and C999. Positions 1033 to 1214 (APITAYAQQT…ETLSTQARSP (182 aa)) constitute a Peptidase S29 domain. Catalysis depends on charge relay system; for serine protease NS3 activity residues H1089 and D1113. The Zn(2+) site is built by C1129 and C1131. Residue S1171 is the Charge relay system; for serine protease NS3 activity of the active site. The Zn(2+) site is built by C1177 and H1181. Residues 1223–1375 (PAVPQSYQVG…SNIEEVALGS (153 aa)) enclose the Helicase ATP-binding domain. 1236–1243 (APTGSGKS) contacts ATP. Mg(2+) is bound at residue S1243. Residues 1322-1325 (DDCH) carry the DECH box motif. A Helicase C-terminal domain is found at 1382-1544 (YGKAIPIACI…DLQPAETTVR (163 aa)). The RNA-binding stretch occupies residues 1492-1504 (QRRGRTGRGRLGT). A helical transmembrane segment spans residues 1664–1684 (STWVLLGGVLAAVAAYCLSVG). The interval 1685-1696 (CVVIVGHIELGG) is NS3-binding. Residues 1685–1811 (CVVIVGHIEL…SVTSPLTTNQ (127 aa)) are Cytoplasmic-facing. The chain crosses the membrane as a helical span at residues 1812–1830 (TMFFNILGGWVATHLAGPQ). Topologically, residues 1831-1834 (ASSA) are lumenal. Residues 1835–1855 (FVVSGLAGAAIGGIGLGRVLL) traverse the membrane as a helical segment. Residue D1856 is a topological domain, cytoplasmic. The chain crosses the membrane as a helical span at residues 1857-1877 (ILAGYGAGVSGALVAFKIMGG). At 1878 to 1887 (EPPTTEDMVN) the chain is on the lumenal side. A helical transmembrane segment spans residues 1888–1908 (LLPAILSPGALVVGVICAAIL). The Cytoplasmic segment spans residues 1909 to 1978 (RRHVGPGEGP…WINEDYPSPC (70 aa)). C1978 is lipidated: S-palmitoyl cysteine; by host. The stretch at 1979 to 2008 (SGDWLRIIWDWVCSVVSDFKTWLSAKIMPA) is an intramembrane region. Over 2009-3000 (LPGLPFISCQ…YHSVSRARTR (992 aa)) the chain is Cytoplasmic. Residues C2017, C2035, C2037, and C2058 each contribute to the Zn(2+) site. Residues 2126–2214 (EFFTEVDGVR…ASSSASQLSA (89 aa)) are FKBP8-binding. Residues 2126 to 2338 (EFFTEVDGVR…PVPPPRRKRT (213 aa)) form a transcriptional activation region. The interval 2141–2145 (PPCRP) is interaction with non-structural protein 4A. Residues 2193-2215 (ARRLARGSPPSEASSSASQLSAP) form a disordered region. Residues 2195–2448 (RLARGSPPSE…ALITPCSAEE (254 aa)) are interaction with host SKP2. Phosphoserine; by host is present on residues S2200, S2203, S2207, S2210, S2213, and S2216. The span at 2200–2215 (SPPSEASSSASQLSAP) shows a compositional bias: low complexity. The tract at residues 2216-2255 (SLKATCQTHRPHPDAELVDANLLWRQEMGSNITRVESETK) is ISDR. The tract at residues 2216-2281 (SLKATCQTHR…AELSAAAECF (66 aa)) is interaction with EIF2AK2/PKR. Positions 2255 to 2312 (KVVILDSFEPLRAETDDAELSAAAECFKKPPKYPPALPIWARPDYNPPLLDRWKSPDY) are NS4B-binding. The segment at 2305-2383 (DRWKSPDYVP…DTQSSTASKV (79 aa)) is V3. Disordered stretches follow at residues 2318-2338 (HGCA…RKRT) and 2356-2419 (KSFP…WSTV). Residues 2328 to 2331 (PPVP) carry the SH3-binding motif. Residues 2333–2341 (PRRKRTIQL) carry the Nuclear localization signal motif. K2356 is covalently cross-linked (Glycyl lysine isopeptide (Lys-Gly) (interchain with G-Cter in ubiquitin)). The segment covering 2359–2381 (PSSKPQEENSSSSGVDTQSSTAS) has biased composition (low complexity). S2459 and S2472 each carry phosphoserine; by host. In terms of domain architecture, RdRp catalytic spans 2644–2762 (PLGFSYDTRC…VAESDGVDED (119 aa)). D2650, D2748, and D2749 together coordinate Mg(2+). The helical transmembrane segment at 3001-3021 (YLLLCLLLLTVGVGIFLLPAR) threads the bilayer.

This sequence belongs to the hepacivirus polyprotein family. Homooligomer. Interacts with E1 (via C-terminus). Interacts with the non-structural protein 5A. Interacts (via N-terminus) with host STAT1 (via SH2 domain); this interaction results in decreased STAT1 phosphorylation and ubiquitin-mediated proteasome-dependent STAT1 degradation, leading to decreased IFN-stimulated gene transcription. Interacts with host STAT3; this interaction constitutively activates STAT3. Interacts with host LTBR receptor. Interacts with host TNFRSF1A receptor and possibly induces apoptosis. Interacts with host HNRPK. Interacts with host YWHAE. Interacts with host UBE3A/E6AP. Interacts with host DDX3X. Interacts with host APOA2. Interacts with host RXRA protein. Interacts with host SP110 isoform 3/Sp110b; this interaction sequesters the transcriptional corepressor SP110 away from the nucleus. Interacts with host CREB3 nuclear transcription protein; this interaction triggers cell transformation. Interacts with host ACY3. Interacts with host C1QR1. Interacts with host RBM24; this interaction, which enhances the interaction of the mature core protein with 5'-UTR, may inhibit viral translation and favor replication. Interacts with host EIF2AK2/PKR; this interaction induces the autophosphorylation of EIF2AK2. Part of the viral assembly initiation complex composed of NS2, E1, E2, NS3, NS4A, NS5A and the mature core protein. As to quaternary structure, forms a heterodimer with envelope glycoprotein E2. Interacts with mature core protein. Interacts with protease NS2. The heterodimer E1/E2 interacts with host CLDN1; this interaction plays a role in viral entry into host cell. Interacts with host SPSB2 (via C-terminus). Part of the viral assembly initiation complex composed of NS2, E1, E2, NS3, NS4A, NS5A and the mature core protein. Interacts with host NEURL3; this interaction prevents E1 binding to glycoprotein E2. In terms of assembly, forms a heterodimer with envelope glycoprotein E1. Interacts with host CD81 and SCARB1 receptors; these interactions play a role in viral entry into host cell. Interacts with host EIF2AK2/PKR; this interaction inhibits EIF2AK2 and probably allows the virus to evade the innate immune response. Interacts with host CD209/DC-SIGN and CLEC4M/DC-SIGNR. Interact with host SPCS1; this interaction is essential for viral particle assembly. Interacts with protease NS2. The heterodimer E1/E2 interacts with host CLDN1; this interaction plays a role in viral entry into host cell. Part of the viral assembly initiation complex composed of NS2, E1, E2, NS3, NS4A, NS5A and the mature core protein. Interacts with host SLC3A2/4F2hc; the interaction may facilitate viral entry into host cell. Interacts with human PLSCR1. Homohexamer. Homoheptamer. Interacts with protease NS2. As to quaternary structure, homodimer. Interacts with host SPCS1; this interaction is essential for viral particle assembly. Interacts with envelope glycoprotein E1. Interacts with envelope glycoprotein E2. Interacts with viroporin p7. Interacts with serine protease/helicase NS3. Part of the replication complex composed of NS2, NS3, NS4A, NS4B, NS5A and the RNA-directed RNA polymerase embedded in an ER-derived membranous web. Part of the viral assembly initiation complex composed of NS2, E1, E2, NS3, NS4A, NS5A and the mature core protein. In terms of assembly, interacts with protease NS2. Interacts with non-structural protein 4A; this interaction stabilizes the folding of NS3 serine protease. NS3-NS4A interaction is essential for NS3 activation and allows membrane anchorage of the latter. NS3/NS4A complex also prevents phosphorylation of host IRF3, thus preventing the establishment of dsRNA induced antiviral state. Interacts with host MAVS; this interaction leads to the cleavage and inhibition of host MAVS. Interacts with host TICAM1; this interaction leads to the cleavage and inhibition of host TICAM1. Interacts with host TANK-binding kinase/TBK1; this interaction results in the inhibition of the association between TBK1 and IRF3, which leads to the inhibition of IRF3 activation. Interacts with host RBM24. Part of the replication complex composed of NS2, NS3, NS4A, NS4B, NS5A and the RNA-directed RNA polymerase embedded in an ER-derived membranous web. Part of the viral assembly initiation complex composed of NS2, E1, E2, NS3, NS4A, NS5A and the mature core protein. Interacts with NS3 serine protease; this interaction stabilizes the folding of NS3 serine protease. NS3-NS4A interaction is essential for NS3 activation and allows membrane anchorage of the latter. Interacts with non-structural protein 5A (via N-terminus). Part of the replication complex composed of NS2, NS3, NS4A, NS4B, NS5A and the RNA-directed RNA polymerase embedded in an ER-derived membranous web. Part of the viral assembly initiation complex composed of NS2, E1, E2, NS3, NS4A, NS5A and the mature core protein. As to quaternary structure, homomultimer. Interacts with non-structural protein NS5A. Interacts with host PLA2G4C; this interaction likely initiates the recruitment of replication complexes to lipid droplets. Interacts with host STING; this interaction disrupts the interaction between STING and TBK1 thereby suppressing the interferon signaling. Part of the replication complex composed of NS2, NS3, NS4A, NS4B, NS5A and the RNA-directed RNA polymerase embedded in an ER-derived membranous web. In terms of assembly, monomer. Homodimer; dimerization is required for RNA-binding. Interacts with the mature core protein. Interacts (via N-terminus) with non-structural protein 4A. Interacts with non-structural protein 4B. Interacts (via region D2) with RNA-directed RNA polymerase. Part of the viral assembly initiation complex composed of NS2, E1, E2, NS3, NS4A, NS5A and the mature core protein. Part of the replication complex composed of NS2, NS3, NS4A, NS4B, NS5A and the RNA-directed RNA polymerase embedded in an ER-derived membranous web. Interacts with host GRB2. Interacts with host BIN1. Interacts with host PIK3R1. Interacts with host SRCAP. Interacts with host FKBP8. Interacts (via C-terminus) with host VAPB (via MSP domain). Interacts with host EIF2AK2/PKR; this interaction leads to disruption of EIF2AK2 dimerization by NS5A and probably allows the virus to evade the innate immune response. Interacts (via N-terminus) with host PACSIN2 (via N-terminus); this interaction attenuates protein kinase C alpha-mediated phosphorylation of PACSIN2 by disrupting the interaction between PACSIN2 and PRKCA. Interacts (via N-terminus) with host SRC kinase (via SH2 domain). Interacts with most Src-family kinases. Interacts with host IFI27 and SKP2; promotes the ubiquitin-mediated proteasomal degradation of NS5A. Interacts with host GPS2. Interacts with host TNFRSF21; this interaction allows the modulation by the virus of JNK, p38 MAPK, STAT3, and Akt signaling pathways in a DR6-dependent manner. Interacts (via N-terminus) with host CIDEB (via N-terminus); this interaction seems to regulate the association of HCV particles with APOE. Interacts with host CHKA/Choline Kinase-alpha; CHKA bridges host PI4KA and NS5A and potentiates NS5A-stimulated PI4KA activity, which then facilitates the targeting of the ternary complex to the ER for viral replication. Interacts with host SPSB2 (via C-terminus); this interaction targets NS5A for ubiquitination and degradation. Interacts with host RAB18; this interaction may promote the association of NS5A and other replicase components with lipid droplets. Interacts (via region D2) with host PPIA/CYPA; the interaction stimulates RNA-binding ability of NS5A and is dependent on the peptidyl-prolyl cis-trans isomerase activity of PPIA/CYPA. Interacts with host TRIM14; this interaction induces the degradation of NS5A. Homooligomer. Interacts with non-structural protein 5A. Interacts with host VAPB. Interacts with host PRK2/PKN2. Interacts with host HNRNPA1 and SEPT6; these interactions facilitate viral replication. Part of the replication complex composed of NS2, NS3, NS4A, NS4B, NS5A and the RNA-directed RNA polymerase. The cofactor is Zn(2+). Mg(2+) serves as cofactor. Post-translationally, specific enzymatic cleavages in vivo yield mature proteins. The structural proteins, core, E1, E2 and p7 are produced by proteolytic processing by host signal peptidases. The core protein precursor is synthesized as a 23 kDa, which is retained in the ER membrane through the hydrophobic signal peptide. Cleavage by the signal peptidase releases the 21 kDa mature core protein. The cleavage of the core protein precursor occurs between aminoacids 176 and 188 but the exact cleavage site is not known. Some degraded forms of the core protein appear as well during the course of infection. The other proteins (p7, NS2, NS3, NS4A, NS4B, NS5A and NS5B) are cleaved by the viral proteases. Autoprocessing between NS2 and NS3 is mediated by the NS2 cysteine protease catalytic domain and regulated by the NS3 N-terminal domain. Phosphorylated by host PKC and PKA. In terms of processing, ubiquitinated; mediated by UBE3A and leading to core protein subsequent proteasomal degradation. Post-translationally, highly N-glycosylated. Palmitoylation is required for NS2/3 autoprocessing and E2 recruitment to membranes. In terms of processing, palmitoylated. This modification may play a role in its polymerization or in protein-protein interactions. Post-translationally, phosphorylated on serines in a basal form termed p56. p58 is a hyperphosphorylated form of p56. p56 and p58 coexist in the cell in roughly equivalent amounts. Hyperphosphorylation is dependent on the presence of NS4A. Host CSNK1A1/CKI-alpha or RPS6KB1 kinases may be responsible for NS5A phosphorylation. Tyrosine phosphorylation is essential for the interaction with host SRC. In terms of processing, ubiquitinated. Ubiquitination, most probably at Lys-2356, mediated by host IFI27 and SKP2 leads to proteasomal degradation, restricting viral infection. Ubiquitination by host TRIM22 leads to interruption of viral replication. Post-translationally, the N-terminus is phosphorylated by host PRK2/PKN2.

It is found in the host endoplasmic reticulum membrane. It localises to the host mitochondrion membrane. The protein resides in the virion. Its subcellular location is the host cytoplasm. The protein localises to the host nucleus. It is found in the host lipid droplet. It localises to the virion membrane. The protein resides in the host mitochondrion. Its subcellular location is the host cell membrane. The protein localises to the host perinuclear region. It catalyses the reaction Hydrolysis of four peptide bonds in the viral precursor polyprotein, commonly with Asp or Glu in the P6 position, Cys or Thr in P1 and Ser or Ala in P1'.. The catalysed reaction is a ribonucleoside 5'-triphosphate + H2O = a ribonucleoside 5'-diphosphate + phosphate + H(+). It carries out the reaction ATP + H2O = ADP + phosphate + H(+). The enzyme catalyses RNA(n) + a ribonucleoside 5'-triphosphate = RNA(n+1) + diphosphate. Its activity is regulated as follows. Inhibited by the antiviral drug hexamethylene amiloride. Inhibition by amantadine appears to be genotype-dependent. Also inhibited by long-alkyl-chain iminosugar derivatives. Activity is up-regulated by PRK2/PKN2-mediated phosphorylation. Its function is as follows. Packages viral RNA to form a viral nucleocapsid, and promotes virion budding. Participates in the viral particle production as a result of its interaction with the non-structural protein 5A. Binds RNA and may function as a RNA chaperone to induce the RNA structural rearrangements taking place during virus replication. Modulates viral translation initiation by interacting with viral IRES and 40S ribosomal subunit. Affects various cell signaling pathways, host immunity and lipid metabolism. Prevents the establishment of cellular antiviral state by blocking the interferon-alpha/beta (IFN-alpha/beta) and IFN-gamma signaling pathways and by blocking the formation of phosphorylated STAT1 and promoting ubiquitin-mediated proteasome-dependent degradation of STAT1. Activates STAT3 leading to cellular transformation. Regulates the activity of cellular genes, including c-myc and c-fos. May repress the promoter of p53, and sequester CREB3 and SP110 isoform 3/Sp110b in the cytoplasm. Represses cell cycle negative regulating factor CDKN1A, thereby interrupting an important check point of normal cell cycle regulation. Targets transcription factors involved in the regulation of inflammatory responses and in the immune response: suppresses TNF-induced NF-kappa-B activation, and activates AP-1. Binds to dendritic cells (DCs) via C1QR1, resulting in down-regulation of T-lymphocytes proliferation. Alters lipid metabolism by interacting with hepatocellular proteins involved in lipid accumulation and storage. Induces up-regulation of FAS promoter activity, and thereby contributes to the increased triglyceride accumulation in hepatocytes (steatosis). In terms of biological role, forms a heterodimer with envelope glycoprotein E2, which mediates virus attachment to the host cell, virion internalization through clathrin-dependent endocytosis and fusion with host membrane. Fusion with the host cell is most likely mediated by both E1 and E2, through conformational rearrangements of the heterodimer required for fusion rather than a classical class II fusion mechanism. E1/E2 heterodimer binds host apolipoproteins such as APOB and ApoE thereby forming a lipo-viro-particle (LVP). APOE associated to the LVP allows the initial virus attachment to cell surface receptors such as the heparan sulfate proteoglycans (HSPGs), syndecan-1 (SDC1), syndecan-1 (SDC2), the low-density lipoprotein receptor (LDLR) and scavenger receptor class B type I (SCARB1). The cholesterol transfer activity of SCARB1 allows E2 exposure and binding of E2 to SCARB1 and the tetraspanin CD81. E1/E2 heterodimer binding on CD81 activates the epithelial growth factor receptor (EGFR) signaling pathway. Diffusion of the complex E1-E2-EGFR-SCARB1-CD81 to the cell lateral membrane allows further interaction with Claudin 1 (CLDN1) and occludin (OCLN) to finally trigger HCV entry. Functionally, forms a heterodimer with envelope glycoprotein E1, which mediates virus attachment to the host cell, virion internalization through clathrin-dependent endocytosis and fusion with host membrane. Fusion with the host cell is most likely mediated by both E1 and E2, through conformational rearrangements of the heterodimer required for fusion rather than a classical class II fusion mechanism. The interaction between envelope glycoprotein E2 and host apolipoprotein E/APOE allows the proper assembly, maturation and infectivity of the viral particles. This interaction is probably promoted via the up-regulation of cellular autophagy by the virus. E1/E2 heterodimer binds host apolipoproteins such as APOB and APOE thereby forming a lipo-viro-particle (LVP). APOE associated to the LVP allows the initial virus attachment to cell surface receptors such as the heparan sulfate proteoglycans (HSPGs), syndecan-1 (SDC1), syndecan-1 (SDC2), the low-density lipoprotein receptor (LDLR) and scavenger receptor class B type I (SCARB1). The cholesterol transfer activity of SCARB1 allows E2 exposure and binding of E2 to SCARB1 and the tetraspanin CD81. E1/E2 heterodimer binding on CD81 activates the epithelial growth factor receptor (EGFR) signaling pathway. Diffusion of the complex E1-E2-EGFR-SCARB1-CD81 to the cell lateral membrane allows further interaction with Claudin 1 (CLDN1) and occludin (OCLN) to finally trigger HCV entry. Inhibits host EIF2AK2/PKR activation, preventing the establishment of an antiviral state. Viral ligand for CD209/DC-SIGN and CLEC4M/DC-SIGNR, which are respectively found on dendritic cells (DCs), and on liver sinusoidal endothelial cells and macrophage-like cells of lymph node sinuses. These interactions allow the capture of circulating HCV particles by these cells and subsequent facilitated transmission to permissive cells such as hepatocytes and lymphocyte subpopulations. The interaction between E2 and host amino acid transporter complex formed by SLC3A2 and SLC7A5/LAT1 may facilitate viral entry into host cell. Ion channel protein that acts as a viroporin and plays an essential role in the assembly, envelopment and secretion of viral particles. Regulates the host cell secretory pathway, which induces the intracellular retention of viral glycoproteins and favors assembly of viral particles. Creates a pore in acidic organelles and releases Ca(2+) and H(+) in the cytoplasm of infected cells, leading to a productive viral infection. High levels of cytoplasmic Ca(2+) may trigger membrane trafficking and transport of viral ER-associated proteins to viroplasms, sites of viral genome replication. This ionic imbalance induces the assembly of the inflammasome complex, which triggers the maturation of pro-IL-1beta into IL-1beta through the action of caspase-1. Targets also host mitochondria and induces mitochondrial depolarization. In addition of its role as a viroporin, acts as a lipid raft adhesion factor. Its function is as follows. Cysteine protease required for the proteolytic auto-cleavage between the non-structural proteins NS2 and NS3. The N-terminus of NS3 is required for the function of NS2 protease (active region NS2-3). Promotes the initiation of viral particle assembly by mediating the interaction between structural and non-structural proteins. In terms of biological role, displays three enzymatic activities: serine protease with a chymotrypsin-like fold, NTPase and RNA helicase. NS3 serine protease, in association with NS4A, is responsible for the cleavages of NS3-NS4A, NS4A-NS4B, NS4B-NS5A and NS5A-NS5B. The NS3/NS4A complex prevents phosphorylation of host IRF3, thus preventing the establishment of dsRNA induced antiviral state. The NS3/NS4A complex induces host amino acid transporter component SLC3A2, thus contributing to HCV propagation. NS3 RNA helicase binds to RNA and unwinds both dsDNA and dsRNA in the 3' to 5' direction, and likely resolves RNA complicated stable secondary structures in the template strand. Binds a single ATP and catalyzes the unzipping of a single base pair of dsRNA. Inhibits host antiviral proteins TBK1 and IRF3 thereby preventing the establishment of an antiviral state. Cleaves host MAVS/CARDIF thereby preventing the establishment of an antiviral state. Cleaves host TICAM1/TRIF, thereby disrupting TLR3 signaling and preventing the establishment of an antiviral state. Functionally, peptide cofactor which forms a non-covalent complex with the N-terminal of NS3 serine protease. The NS3/NS4A complex prevents phosphorylation of host IRF3, thus preventing the establishment of dsRNA induced antiviral state. The NS3/NS4A complex induces host amino acid transporter component SLC3A2, thus contributing to HCV propagation. Induces a specific membrane alteration that serves as a scaffold for the virus replication complex. This membrane alteration gives rise to the so-called ER-derived membranous web that contains the replication complex. NS4B self-interaction contributes to its function in membranous web formation. Promotes host TRIF protein degradation in a CASP8-dependent manner thereby inhibiting host TLR3-mediated interferon signaling. Disrupts the interaction between STING and TBK1 contributing to the inhibition of interferon signaling. Its function is as follows. Phosphorylated protein that is indispensable for viral replication and assembly. Both hypo- and hyperphosphorylated states are required for the viral life cycle. The hyperphosphorylated form of NS5A is an inhibitor of viral replication. Involved in RNA-binding and especially in binding to the viral genome. Zinc is essential for RNA-binding. Participates in the viral particle production as a result of its interaction with the mature viral core protein. Its interaction with host VAPB may target the viral replication complex to vesicles. Down-regulates viral IRES translation initiation. Mediates interferon resistance, presumably by interacting with and inhibiting host EIF2AK2/PKR. Prevents BIN1-induced apoptosis. Acts as a transcriptional activator of some host genes important for viral replication when localized in the nucleus. Via the interaction with host PACSIN2, modulates lipid droplet formation in order to promote virion assembly. Modulates TNFRSF21/DR6 signaling pathway for viral propagation. In terms of biological role, RNA-dependent RNA polymerase that performs primer-template recognition and RNA synthesis during viral replication. Initiates RNA transcription/replication at a flavin adenine dinucleotide (FAD), resulting in a 5'- FAD cap on viral RNAs. In this way, recognition of viral 5' RNA by host pattern recognition receptors can be bypassed, thereby evading activation of antiviral pathways. The polypeptide is Genome polyprotein (Homo sapiens (Human)).